We begin with the raw amino-acid sequence, 441 residues long: Synaptotagmin-1 (441 aa).

At 1–69 (MVKLDFSSQD…DVVKEKVMQQ (69 aa)) the chain is on the vesicular side. A helical membrane pass occupies residues 70 to 96 (TGMPEWAFVFLGFVFILLVLACAFCLI). The Cytoplasmic segment spans residues 97–441 (RKLFGKKRHG…EEGDKKDDKK (345 aa)). 2 C2 domains span residues 159–278 (KLGR…EEWK) and 292–425 (SLGD…AQWH). Ca(2+) is bound by residues D190, D196, D248, F249, D250, S253, K254, D256, D323, D329, D383, D385, and D391.

This sequence belongs to the synaptotagmin family. The cofactor is Ca(2+). In terms of tissue distribution, localized to regions known to be rich in synapses and appears to be associated with synaptic vesicles. Also found in some non-neuronal secretory structures.

It localises to the cytoplasmic vesicle. It is found in the secretory vesicle. The protein resides in the synaptic vesicle membrane. Its subcellular location is the synapse. Functionally, may have a regulatory role in the membrane interactions during trafficking of synaptic vesicles at the active zone of the synapse. It binds acidic phospholipids with a specificity that requires the presence of both an acidic head group and a diacyl backbone. Involved in necrotic cell death. The chain is Synaptotagmin-1 (snt-1) from Caenorhabditis elegans.